The following is a 184-amino-acid chain: UPF0669 protein C6orf120 homolog (184 aa).

Residues 1–23 (MAAPWTGALLLLLASQAVSSAQA) form the signal peptide. An N-linked (GlcNAc...) asparagine glycan is attached at Asn47.

Belongs to the UPF0669 family.

Its subcellular location is the secreted. Functionally, may be involved in induction of apoptosis in CD4(+) T-cells, but not CD8(+) T-cells or hepatocytes. In Bos taurus (Bovine), this protein is UPF0669 protein C6orf120 homolog.